Here is a 190-residue protein sequence, read N- to C-terminus: Small ribosomal subunit protein uS7 (190 aa).

The residue at position 2 (threonine 2) is an N-acetylthreonine.

The protein belongs to the universal ribosomal protein uS7 family. As to quaternary structure, component of the small ribosomal subunit. Part of the small subunit (SSU) processome, composed of more than 70 proteins and the RNA chaperone small nucleolar RNA (snoRNA) U3.

Its subcellular location is the cytoplasm. It localises to the nucleus. The protein resides in the nucleolus. Functionally, component of the small ribosomal subunit. The ribosome is a large ribonucleoprotein complex responsible for the synthesis of proteins in the cell. Part of the small subunit (SSU) processome, first precursor of the small eukaryotic ribosomal subunit. During the assembly of the SSU processome in the nucleolus, many ribosome biogenesis factors, an RNA chaperone and ribosomal proteins associate with the nascent pre-rRNA and work in concert to generate RNA folding, modifications, rearrangements and cleavage as well as targeted degradation of pre-ribosomal RNA by the RNA exosome. In Dictyostelium discoideum (Social amoeba), this protein is Small ribosomal subunit protein uS7 (rps5).